We begin with the raw amino-acid sequence, 465 residues long: Probable Xaa-Pro aminopeptidase PEPP (465 aa).

Positions 259, 270, 395, and 435 each coordinate Mn(2+).

This sequence belongs to the peptidase M24B family. Mn(2+) is required as a cofactor.

The catalysed reaction is Release of any N-terminal amino acid, including proline, that is linked to proline, even from a dipeptide or tripeptide.. In terms of biological role, catalyzes the removal of a penultimate prolyl residue from the N-termini of peptides. The sequence is that of Probable Xaa-Pro aminopeptidase PEPP (PEPP) from Pyricularia oryzae (strain 70-15 / ATCC MYA-4617 / FGSC 8958) (Rice blast fungus).